The following is a 77-amino-acid chain: Secapin (77 aa).

The first 32 residues, 1–32 (MKNYSKNATHLITVLLFSFVVILLIIPSKCEA), serve as a signal peptide directing secretion. Positions 33 to 52 (VSNDMQPLEARSADLVPEPR) are excised as a propeptide. A disulfide bond links Cys61 and Cys72.

This sequence belongs to the secapin family. Expressed by the venom gland.

Its subcellular location is the secreted. Its function is as follows. Serine protease inhibitor which exhibits antifibrinolytic, antielastolytic and antimicrobial activities. Displays antimicrobial activity against bacteria and fungi. Likely functions in the innate immune response to microbial infection and possibly in the venom, as an antifibrinolytic agent. Not toxic to mice but does induce slight sedation at higher doses (from 40 mg/kg). At a dose of 80 mg/kg, sedation occurs 15 minutes after injection and is accompanied by piloerection and hypothermia. This Apis mellifera (Honeybee) protein is Secapin.